A 524-amino-acid chain; its full sequence is MIQQALLSVSDKTGIVDFARALHERGVKLLSTGGTAKLLAESSLPVTEVADYTGFPEMLDGRVKTLHPKVHGGILARRDLPEHMAALSEHSIPTIDLLVVNLYPFQQTVAKDECSLADAIENIDIGGPTMLRSAAKNHRDVTVIVDPADYATVLAEMQANNNTVGYETNFMLAKKVFAHTAQYDGAITNYLTSLGADKSHSTRSAYPQTLNLAFDKVQEMRYGENPHQSAAFYRDLKAVDGALANYKQLQGKELSYNNIADADAAWECVKSFDAAHGAACVIIKHANPCGVAIGGTAQEAYEKAFKTDSTSAFGGIIAFNVPLDEAAAQVVAKQFVEVLIAPGFSEGARAVFAAKQNVRVLEIPLGKGVNAYDFKRVGGGLLVQSPDAKNVQPSELRVVTKRHPTPKEMDDLMFAWRVAKFVKSNAIVFCGGGMTLGVGAGQMSRVDSARIASIKAQNAGLTLAGSAVASDAFFPFRDGLDVVVDAGASCVIQPGGSVRDDEVIAAADERNVAMIFTGTRHFRH.

Positions 1-145 (MIQQALLSVS…KNHRDVTVIV (145 aa)) constitute an MGS-like domain.

The protein belongs to the PurH family.

It catalyses the reaction (6R)-10-formyltetrahydrofolate + 5-amino-1-(5-phospho-beta-D-ribosyl)imidazole-4-carboxamide = 5-formamido-1-(5-phospho-D-ribosyl)imidazole-4-carboxamide + (6S)-5,6,7,8-tetrahydrofolate. It carries out the reaction IMP + H2O = 5-formamido-1-(5-phospho-D-ribosyl)imidazole-4-carboxamide. The protein operates within purine metabolism; IMP biosynthesis via de novo pathway; 5-formamido-1-(5-phospho-D-ribosyl)imidazole-4-carboxamide from 5-amino-1-(5-phospho-D-ribosyl)imidazole-4-carboxamide (10-formyl THF route): step 1/1. It functions in the pathway purine metabolism; IMP biosynthesis via de novo pathway; IMP from 5-formamido-1-(5-phospho-D-ribosyl)imidazole-4-carboxamide: step 1/1. The polypeptide is Bifunctional purine biosynthesis protein PurH (Ralstonia pickettii (strain 12J)).